A 928-amino-acid polypeptide reads, in one-letter code: Protein ARABIDILLO 2 (928 aa).

The short motif at Arg-3–Arg-8 is the Nuclear localization signal element. Residues Tyr-37–Leu-83 form the F-box domain. 13 ARM repeats span residues Ala-147–Val-186, Thr-237–Gln-278, Lys-303–Arg-341, Ser-370–Val-409, Cys-419–Val-458, Ala-460–Val-499, Glu-501–Ala-543, Asp-545–Ala-585, Gly-591–Phe-630, Asp-632–Val-674, Glu-676–Phe-715, Pro-717–Asp-757, and Ile-824–Ile-864.

The protein belongs to the beta-catenin family. In terms of tissue distribution, expressed ubiquitously.

Its subcellular location is the nucleus. Functionally, promotes lateral root initiation and development, independently of auxin (IAA) and abscisis acid (ABA). The polypeptide is Protein ARABIDILLO 2 (Arabidopsis thaliana (Mouse-ear cress)).